The sequence spans 138 residues: Thyrotropin subunit beta (138 aa).

Positions 1–20 (MNAVVLFSVLFALACGQVSS) are cleaved as a signal peptide. 6 disulfides stabilise this stretch: C22–C72, C36–C87, C39–C125, C47–C103, C51–C105, and C108–C115. N43 is a glycosylation site (N-linked (GlcNAc...) asparagine). Residues 133-138 (LGGFSG) constitute a propeptide that is removed on maturation.

Belongs to the glycoprotein hormones subunit beta family. Heterodimer of a common alpha chain and a unique beta chain which confers biological specificity to thyrotropin, lutropin, follitropin and gonadotropin.

The protein resides in the secreted. Its function is as follows. Indispensable for the control of thyroid structure and metabolism. In Rattus norvegicus (Rat), this protein is Thyrotropin subunit beta (Tshb).